Reading from the N-terminus, the 347-residue chain is Probable cytosolic iron-sulfur protein assembly protein 1 (347 aa).

WD repeat units follow at residues 11-48 (LHNE…DGLV), 62-101 (SHKK…GDAD), 122-161 (GHEN…EEYE), 168-207 (EHSQ…WEAA), 212-255 (GHEG…SIEE), 266-304 (VHGK…VWEV), and 311-347 (SHSI…WAYN).

Belongs to the WD repeat CIA1 family. As to quaternary structure, interacts with NAR1.

Its subcellular location is the cytoplasm. It is found in the nucleus. In terms of biological role, essential component of the cytosolic iron-sulfur (Fe/S) protein assembly machinery. Required for the maturation of extramitochondrial Fe/S proteins. In Vanderwaltozyma polyspora (strain ATCC 22028 / DSM 70294 / BCRC 21397 / CBS 2163 / NBRC 10782 / NRRL Y-8283 / UCD 57-17) (Kluyveromyces polysporus), this protein is Probable cytosolic iron-sulfur protein assembly protein 1.